Here is a 512-residue protein sequence, read N- to C-terminus: Maturase K (512 aa).

This sequence belongs to the intron maturase 2 family. MatK subfamily.

It is found in the plastid. The protein localises to the chloroplast. In terms of biological role, usually encoded in the trnK tRNA gene intron. Probably assists in splicing its own and other chloroplast group II introns. This Daucus carota (Wild carrot) protein is Maturase K.